A 412-amino-acid chain; its full sequence is Argininosuccinate synthase (412 aa).

10-18 (AYSGGLDTS) provides a ligand contact to ATP. Residue Tyr89 coordinates L-citrulline. An ATP-binding site is contributed by Gly119. L-aspartate-binding residues include Thr121, Asn125, and Asp126. Asn125 provides a ligand contact to L-citrulline. Positions 129, 177, 261, and 273 each coordinate L-citrulline.

The protein belongs to the argininosuccinate synthase family. Type 1 subfamily. In terms of assembly, homotetramer.

The protein resides in the cytoplasm. The enzyme catalyses L-citrulline + L-aspartate + ATP = 2-(N(omega)-L-arginino)succinate + AMP + diphosphate + H(+). Its pathway is amino-acid biosynthesis; L-arginine biosynthesis; L-arginine from L-ornithine and carbamoyl phosphate: step 2/3. The chain is Argininosuccinate synthase from Bifidobacterium longum subsp. infantis (strain ATCC 15697 / DSM 20088 / JCM 1222 / NCTC 11817 / S12).